We begin with the raw amino-acid sequence, 711 residues long: Forkhead box protein P1 (711 aa).

A compositionally biased stretch (polar residues) spans 1 to 19; it reads MMQESGSEAKSNGSTIQNG. The tract at residues 1–41 is disordered; sequence MMQESGSEAKSNGSTIQNGSSGGNHLLECGTLRDTRSNGEA. Residue Ser115 is modified to Phosphoserine. Disordered regions lie at residues 273 to 292 and 305 to 332; these read HTAEETTGSNHSSLDLTSTC and MNPHASTNGQLSVHTPKRESLSHEEHPH. A compositionally biased stretch (polar residues) spans 305–317; sequence MNPHASTNGQLSV. Positions 320–332 are enriched in basic and acidic residues; that stretch reads PKRESLSHEEHPH. Lys321 is covalently cross-linked (Glycyl lysine isopeptide (Lys-Gly) (interchain with G-Cter in SUMO2)). The segment at 340–365 adopts a C2H2-type zinc-finger fold; that stretch reads GVCKWPGCEAVCDDFPAFLKHLNSEH. Residues 382–403 are leucine-zipper; it reads VQQLELQLAKDKERLQAMMTHL. Residues Lys406 and Lys411 each participate in a glycyl lysine isopeptide (Lys-Gly) (interchain with G-Cter in SUMO2) cross-link. The segment at 416-420 is CTBP1-binding; that stretch reads PLNLV. Positions 424–437 are enriched in polar residues; sequence TLSKSASEASPQSL. A disordered region spans residues 424-456; it reads TLSKSASEASPQSLPHTPTTPTAPLTPVTQGPS. A compositionally biased stretch (low complexity) spans 438–452; that stretch reads PHTPTTPTAPLTPVT. Lys476 is covalently cross-linked (Glycyl lysine isopeptide (Lys-Gly) (interchain with G-Cter in SUMO2)). A DNA-binding region (fork-head) is located at residues 499–589; it reads RPPFTYASLI…PQKISGNPSL (91 aa). Positions 645–711 are disordered; that stretch reads EHTNSNESDS…EDEPVNEDME (67 aa). Residues 646 to 657 show a composition bias toward polar residues; the sequence is HTNSNESDSSPG. Thr687 carries the phosphothreonine modification. Ser692 is modified (phosphoserine). Over residues 701–711 the composition is skewed to acidic residues; it reads YEDEPVNEDME.

In terms of assembly, forms homodimers and heterodimers with FOXP2 and FOXP4. Dimerization is required for DNA-binding. Self-associates. Interacts with CTBP1. Interacts with NCOR2 and AR. Interacts with FOXP2. Interacts with TBR1. Interacts with AURKA; this interaction facilitates the phosphorylation of FOXP1, which suppresses the expression of FBXL7. Interacts with ZMYM2.

The protein resides in the nucleus. Its function is as follows. Transcriptional repressor. Can act with CTBP1 to synergistically repress transcription but CTPBP1 is not essential. Plays an important role in the specification and differentiation of lung epithelium. Acts cooperatively with FOXP4 to regulate lung secretory epithelial cell fate and regeneration by restricting the goblet cell lineage program; the function may involve regulation of AGR2. Essential transcriptional regulator of B-cell development. Involved in regulation of cardiac muscle cell proliferation. Involved in the columnar organization of spinal motor neurons. Promotes the formation of the lateral motor neuron column (LMC) and the preganglionic motor column (PGC) and is required for respective appropriate motor axon projections. The segment-appropriate generation of spinal cord motor columns requires cooperation with other Hox proteins. Can regulate PITX3 promoter activity; may promote midbrain identity in embryonic stem cell-derived dopamine neurons by regulating PITX3. Negatively regulates the differentiation of T follicular helper cells T(FH)s. Involved in maintenance of hair follicle stem cell quiescence; the function probably involves regulation of FGF18. Represses transcription of various pro-apoptotic genes and cooperates with NF-kappa B-signaling in promoting B-cell expansion by inhibition of caspase-dependent apoptosis. Binds to CSF1R promoter elements and is involved in regulation of monocyte differentiation and macrophage functions; repression of CSF1R in monocytes seems to involve NCOR2 as corepressor. Involved in endothelial cell proliferation, tube formation and migration indicative for a role in angiogenesis; the role in neovascularization seems to implicate suppression of SEMA5B. Can negatively regulate androgen receptor signaling. Acts as a transcriptional activator of the FBXL7 promoter; this activity is regulated by AURKA. This is Forkhead box protein P1 (Foxp1) from Rattus norvegicus (Rat).